Consider the following 538-residue polypeptide: Importin subunit alpha-4 (538 aa).

The 58-residue stretch at 1-58 (MSLRPSTRAELRKKIYKTGVDADEARRRREDNLVEIRKNKREDSLLKKRREGMMLQQQ) folds into the IBB domain. ARM repeat units follow at residues 112–152 (SPPI…NVAS), 155–194 (SDHT…NVAG), 197–237 (PNCR…NFCR), 239–278 (KPPT…YLSD), 281–320 (NDKI…NIVT), 323–363 (DSQT…NITA), 366–405 (KLQI…NATS), and 409–448 (HEQI…NILK).

Belongs to the importin alpha family. Forms a complex with importin subunit beta-1. Interacts with A.tumefaciens VirD2 and VirE2.

Its subcellular location is the nucleus envelope. Functionally, binds to conventional NLS motifs and mediates nuclear protein import across the nuclear envelope. Acts as a cellular receptor for the nuclear import of the virD2 protein of Agrobacterium and is essential for Agrobacterium-mediated root transformation. The protein is Importin subunit alpha-4 of Arabidopsis thaliana (Mouse-ear cress).